The sequence spans 291 residues: Kynurenine formamidase (291 aa).

Residues 33-37 (HGGAW) carry the HGGXW motif. Ser-107 acts as the Nucleophile in catalysis. Active-site residues include Asp-242 and His-280.

This sequence belongs to the kynurenine formamidase family. Homodimer.

The catalysed reaction is N-formyl-L-kynurenine + H2O = L-kynurenine + formate + H(+). Its pathway is amino-acid degradation; L-tryptophan degradation via kynurenine pathway; L-kynurenine from L-tryptophan: step 2/2. Catalyzes the hydrolysis of N-formyl-L-kynurenine to L-kynurenine, the second step in the kynurenine pathway of tryptophan degradation. Kynurenine may be further oxidized to nicotinic acid, NAD(H) and NADP(H). Required for elimination of toxic metabolites. In Debaryomyces hansenii (strain ATCC 36239 / CBS 767 / BCRC 21394 / JCM 1990 / NBRC 0083 / IGC 2968) (Yeast), this protein is Kynurenine formamidase.